A 698-amino-acid chain; its full sequence is Elongation factor G (698 aa).

One can recognise a tr-type G domain in the interval 8–290; that stretch reads ERYRNIGISA…AVIEFLPSPV (283 aa). Residues 17-24, 88-92, and 142-145 each bind GTP; these read AHIDAGKT, DTPGH, and NKMD.

The protein belongs to the TRAFAC class translation factor GTPase superfamily. Classic translation factor GTPase family. EF-G/EF-2 subfamily.

The protein resides in the cytoplasm. Catalyzes the GTP-dependent ribosomal translocation step during translation elongation. During this step, the ribosome changes from the pre-translocational (PRE) to the post-translocational (POST) state as the newly formed A-site-bound peptidyl-tRNA and P-site-bound deacylated tRNA move to the P and E sites, respectively. Catalyzes the coordinated movement of the two tRNA molecules, the mRNA and conformational changes in the ribosome. The protein is Elongation factor G of Azoarcus sp. (strain BH72).